Reading from the N-terminus, the 609-residue chain is MKVINLFASSIITTLSMLTLPIVLTSTSIYKNKLYPQYVKTAISYAFMISMIPTTMFIYSGQEMIISNWHWMTIQTMKLTLSFKLDHFSMIFVPVALFVTWSIMEFSMWYMHSDPFINRFFKYLLMFLITMMILVTANNLFQLFIGWEGVGIMSFLLIGWWHGRTDANTAALQAVLYNRIGDVGFIMAMAWFLINLNTWELQQIFISHHNNLNVPLMGLLLAATGKSAQFGLHPWLPSAMEGPTPVSALLHSSTMVVAGVFLLIRFHPLMEHNTMMQTTTLCLGAITTLFTAICALTQNDIKKIIAFSTSSQLGLMIVTIGINQPHLAFLHICTHAFFKAMLFLCSGSIIHNLNDEQDIRKMGGLYKVLPFTTTSLIVGSLALTGMPFLTGFYSKDLIIETANTSYTNAWALLLTLVATSMTAAYSTRIMFFALLDQPRFNPMITINENSPLLINPIKRLLLGSIFAGYLISYNITPTSTPQMTMPHYLKLMALTVTLLGFILALELNLTSQSLKLKHPSNLFKFSNLLGYFPTIIHRYMPMVNLSASQKLASTLLDAIWLENALPKSISYFHMKSSVTISNQKGLIKLYFLSFIITLILALMMINSHE.

Helical transmembrane passes span Val-3–Val-23, Thr-41–Gly-61, Met-90–Tyr-110, Pro-115–Val-135, Leu-140–Trp-160, Ala-174–Ile-194, Val-214–Leu-236, Thr-244–Ile-264, Met-276–Leu-296, Ile-304–Asn-323, Ala-328–Ile-350, Val-368–Phe-388, Trp-410–Phe-432, Leu-460–Thr-480, Leu-491–Ser-511, and Gly-585–Ile-605.

The protein belongs to the complex I subunit 5 family. As to quaternary structure, core subunit of respiratory chain NADH dehydrogenase (Complex I) which is composed of 45 different subunits.

The protein localises to the mitochondrion inner membrane. The enzyme catalyses a ubiquinone + NADH + 5 H(+)(in) = a ubiquinol + NAD(+) + 4 H(+)(out). Functionally, core subunit of the mitochondrial membrane respiratory chain NADH dehydrogenase (Complex I) which catalyzes electron transfer from NADH through the respiratory chain, using ubiquinone as an electron acceptor. Essential for the catalytic activity and assembly of complex I. This chain is NADH-ubiquinone oxidoreductase chain 5 (MT-ND5), found in Halichoerus grypus (Gray seal).